The chain runs to 1004 residues: Sodium/potassium-transporting ATPase subunit alpha-B (1004 aa).

2 consecutive transmembrane segments (helical) span residues 76–96 (LFGGFALLLWTGAILCFLAYG) and 110–126 (NLYLGIVLATVVIVTGI). The tract at residues 197 to 216 (SSLTGESEPQARSPEFTNDN) is disordered. A run of 2 helical transmembrane segments spans residues 272–294 (FIHIITGVAVFLGVTFFIIAFVL) and 301–329 (AVVFLIGIIVANVPEGLLATVTVCLTLTA). The 4-aspartylphosphate intermediate role is filled by aspartate 357. Lysine 489 lines the ATP pocket. Residues aspartate 698 and aspartate 702 each contribute to the Mg(2+) site. 4 helical membrane passes run 768-791 (ISPFLLFILFDIPLPLGTVTILCI), 828-855 (ERLISLAYGQIGMIQASAGFFVYFVIMA), 897-918 (SSCHTAYFVSIVIVQWADLIIS), and 934-959 (ILNFALVFETCLAAFLSYTPGMDKGL).

This sequence belongs to the cation transport ATPase (P-type) (TC 3.A.3) family. Type IIC subfamily. The sodium/potassium-transporting ATPase is composed of a catalytic alpha subunit, an auxiliary non-catalytic beta subunit and an additional regulatory subunit.

Its subcellular location is the cell membrane. It catalyses the reaction K(+)(out) + Na(+)(in) + ATP + H2O = K(+)(in) + Na(+)(out) + ADP + phosphate + H(+). This is the catalytic component of the active enzyme, which catalyzes the hydrolysis of ATP coupled with the exchange of sodium and potassium ions across the plasma membrane. This action creates the electrochemical gradient of sodium and potassium ions, providing the energy for active transport of various nutrients. The protein is Sodium/potassium-transporting ATPase subunit alpha-B of Artemia franciscana (Brine shrimp).